A 237-amino-acid chain; its full sequence is LexA repressor (237 aa).

The H-T-H motif DNA-binding region spans F26–T46. Catalysis depends on for autocatalytic cleavage activity residues S158 and K196.

This sequence belongs to the peptidase S24 family. In terms of assembly, homodimer.

The catalysed reaction is Hydrolysis of Ala-|-Gly bond in repressor LexA.. Represses a number of genes involved in the response to DNA damage (SOS response), including recA and lexA. In the presence of single-stranded DNA, RecA interacts with LexA causing an autocatalytic cleavage which disrupts the DNA-binding part of LexA, leading to derepression of the SOS regulon and eventually DNA repair. The polypeptide is LexA repressor (Rhodospirillum centenum (strain ATCC 51521 / SW)).